We begin with the raw amino-acid sequence, 366 residues long: DNA repair protein RAD51 homolog 3 (366 aa).

The required for Holliday junction resolution activity stretch occupies residues 1–117; the sequence is MQRELVSFPL…LMKTTEVCGV (117 aa). Serine 11 carries the phosphoserine modification. The segment at 70–127 is interaction with RAD51B, RAD51D and XRCC3; it reads SVAGKKYTALELLEQEHTQGFIITFCSALDNILGGGIPLMKTTEVCGVPGVGKTQLCM. 116–123 serves as a coordination point for ATP; the sequence is GVPGVGKT. The segment at 338–366 is disordered; that stretch reads RDAAVTASSSQTEGSSNLRKRSREPEEGC. Polar residues predominate over residues 343–354; that stretch reads TASSSQTEGSSN. The Nuclear localization signal motif lies at 356-360; the sequence is RKRSR.

Belongs to the RecA family. RAD51 subfamily. In terms of assembly, part of the RAD51 paralog protein complexes BCDX2 and CX3; the complexes have a ring-like structure arranged into a flat disc around a central channel. The BCDX2 complex consits of RAD51B, RAD51C, RAD51D and XRCC2; the CX3 complex consists of RAD51C and XRCC3. The BCDX2 subcomplex RAD51B:RAD51C interacts with RAD51. Interacts with SWSAP1; involved in homologous recombination repair. Interacts directly with PALB2 which may serve as a scaffold for a HR complex containing PALB2, BRCA2, RAD51C, RAD51 and XRCC3. Interacts with HELQ.

It is found in the nucleus. It localises to the cytoplasm. The protein resides in the perinuclear region. Its subcellular location is the mitochondrion. In terms of biological role, essential for the homologous recombination (HR) pathway of DNA repair. Involved in the homologous recombination repair (HRR) pathway of double-stranded DNA breaks arising during DNA replication or induced by DNA-damaging agents. Part of the RAD51 paralog protein complexes BCDX2 and CX3 which act at different stages of the BRCA1-BRCA2-dependent HR pathway. Upon DNA damage, BCDX2 seems to act downstream of BRCA2 recruitment and upstream of RAD51 recruitment; CX3 seems to act downstream of RAD51 recruitment; both complexes bind predominantly to the intersection of the four duplex arms of the Holliday junction (HJ) and to junction of replication forks. The BCDX2 complex was originally reported to bind single-stranded DNA, single-stranded gaps in duplex DNA and specifically to nicks in duplex DNA. The BCDX2 subcomplex RAD51B:RAD51C exhibits single-stranded DNA-dependent ATPase activity suggesting an involvement in early stages of the HR pathway. Involved in RAD51 foci formation in response to DNA damage suggesting an involvement in early stages of HR probably in the invasion step. Has an early function in DNA repair in facilitating phosphorylation of the checkpoint kinase CHEK2 and thereby transduction of the damage signal, leading to cell cycle arrest and HR activation. Participates in branch migration and HJ resolution and thus is important for processing HR intermediates late in the DNA repair process; the function may be linked to the CX3 complex. Part of a PALB2-scaffolded HR complex containing BRCA2 and which is thought to play a role in DNA repair by HR. Protects RAD51 from ubiquitin-mediated degradation that is enhanced following DNA damage. Plays a role in regulating mitochondrial DNA copy number under conditions of oxidative stress in the presence of RAD51 and XRCC3. Contributes to DNA cross-link resistance, sister chromatid cohesion and genomic stability. Involved in maintaining centrosome number in mitosis. In Cricetulus griseus (Chinese hamster), this protein is DNA repair protein RAD51 homolog 3 (RAD51C).